Here is a 315-residue protein sequence, read N- to C-terminus: Ferrochelatase (315 aa).

The Fe cation site is built by histidine 193 and glutamate 273.

It belongs to the ferrochelatase family.

The protein localises to the cytoplasm. It catalyses the reaction heme b + 2 H(+) = protoporphyrin IX + Fe(2+). It participates in porphyrin-containing compound metabolism; protoheme biosynthesis; protoheme from protoporphyrin-IX: step 1/1. Catalyzes the ferrous insertion into protoporphyrin IX. The polypeptide is Ferrochelatase (Wolbachia sp. subsp. Drosophila simulans (strain wRi)).